The sequence spans 297 residues: MRPELSDYEHISAGKVREIYEIDAEHLLMVVTDRISAYDFVLDTDIPDKGRVLTAMSAYFFEQIDFPNHLAGPLDDERIPEEVLGRAMVCRKLDMVPFECVARGYLTGSGLKEYEATGAVCGVKLPEGLVEASKLDEPIFTPATKAEIGDHDENVGFDVVVKDLGEDLAERLRTATLEIYSQAAKMAEEKGLILADTKFEFGLDKEGNLVLADEVLTPDSSRYWPAEGYEEGKVQPSFDKQFVRNWLTGPKSGWDKNDGSQPPELPGSVVEATRARYVEAYERISGKRFADWIGSCV.

Belongs to the SAICAR synthetase family.

It carries out the reaction 5-amino-1-(5-phospho-D-ribosyl)imidazole-4-carboxylate + L-aspartate + ATP = (2S)-2-[5-amino-1-(5-phospho-beta-D-ribosyl)imidazole-4-carboxamido]succinate + ADP + phosphate + 2 H(+). Its pathway is purine metabolism; IMP biosynthesis via de novo pathway; 5-amino-1-(5-phospho-D-ribosyl)imidazole-4-carboxamide from 5-amino-1-(5-phospho-D-ribosyl)imidazole-4-carboxylate: step 1/2. This chain is Phosphoribosylaminoimidazole-succinocarboxamide synthase, found in Corynebacterium urealyticum (strain ATCC 43042 / DSM 7109).